A 914-amino-acid polypeptide reads, in one-letter code: Effector protein hopAE1 (914 aa).

A compositionally biased stretch (polar residues) spans 1-13 (MMPSQITRSSHSS). Residues 1-31 (MMPSQITRSSHSSLPEVAPASGDAAGVSEQT) form a disordered region.

This sequence belongs to the HopW family.

It is found in the secreted. The polypeptide is Effector protein hopAE1 (hopAE1) (Pseudomonas syringae pv. syringae (strain B728a)).